The primary structure comprises 470 residues: E3 ubiquitin-protein ligase TRAIP (470 aa).

The RING-type; atypical zinc-finger motif lies at 7-50; that stretch reads CTICSDFFDHSRDVAAIHCGHTFHLQCLIQWFETAPSRTCPQCR. The stretch at 76 to 277 forms a coiled coil; sequence AEFLKNELDS…RKKLMILQGT (202 aa). The segment at 211 to 470 is interaction with CYLD; sequence LKEARKATGE…QPKLDTFLCQ (260 aa). The short motif at 461-470 is the PIP-box element; that stretch reads QPKLDTFLCQ.

The protein belongs to the TRAIP family. In terms of assembly, interacts (via PIP-box) with PCNA. Binds TRAF1, TRAF2, TRAF3, TRAF5 and TRAF6 is part of the receptor-TRAF signaling complex. May interact with CYLD; the C-terminus interacts with CYLD, however the interaction was not detected with the full-length protein. Interacts with POLK and POLN. Interacts with UIMC1. Autoubiquitinated. In terms of processing, sumoylated; sumoylation is required for nuclear localization. Sumoylation increases protein stability, possibly by preventing ubiquitination. Detected in testis and thymus, and at lower levels in spleen.

The protein resides in the nucleus. It is found in the nucleoplasm. Its subcellular location is the nucleolus. It localises to the chromosome. The protein localises to the cytoplasm. The protein resides in the perinuclear region. The catalysed reaction is S-ubiquitinyl-[E2 ubiquitin-conjugating enzyme]-L-cysteine + [acceptor protein]-L-lysine = [E2 ubiquitin-conjugating enzyme]-L-cysteine + N(6)-ubiquitinyl-[acceptor protein]-L-lysine.. Its pathway is protein modification; protein ubiquitination. Its function is as follows. E3 ubiquitin ligase required to protect genome stability in response to replication stress. Acts as a key regulator of interstrand cross-link repair, which takes place when both strands of duplex DNA are covalently tethered together, thereby blocking replication and transcription. During mitosis, controls the choice between the two pathways of replication-coupled interstrand-cross-link repair by mediating ubiquitination of MCM7 subunit of the CMG helicase complex. Short ubiquitin chains on MCM7 promote recruitment of DNA glycosylase NEIL3. If the interstrand cross-link cannot be cleaved by NEIL3, the ubiquitin chains continue to grow on MCM7, promoting the unloading of the CMG helicase complex by the VCP/p97 ATPase, enabling the Fanconi anemia DNA repair pathway. Only catalyzes ubiquitination of MCM7 when forks converge. Also involved in the repair of covalent DNA-protein cross-links (DPCs) during DNA synthesis: promotes ubiquitination of DPCs, leading to their degradation by the proteasome. Has also been proposed to play a role in promoting translesion synthesis by mediating the assembly of 'Lys-63'-linked poly-ubiquitin chains on the Y-family polymerase POLN in order to facilitate bypass of DNA lesions and preserve genomic integrity. The function in translesion synthesis is however controversial. Acts as a regulator of the spindle assembly checkpoint. Also acts as a negative regulator of innate immune signaling by inhibiting activation of NF-kappa-B mediated by TNF. Negatively regulates TLR3/4- and RIG-I-mediated IRF3 activation and subsequent IFNB1 production and cellular antiviral response by promoting 'Lys-48'-linked polyubiquitination of TNK1 leading to its proteasomal degradation. This chain is E3 ubiquitin-protein ligase TRAIP, found in Mus musculus (Mouse).